A 235-amino-acid chain; its full sequence is Ion-translocating oxidoreductase complex subunit E (235 aa).

The next 5 helical transmembrane spans lie at 63–83 (LGLS…ISLF), 93–113 (IPIY…LMNA), 117–137 (TLYQ…IIIG), 152–172 (IWDG…LGAL), and 206–226 (SFLL…LLAI).

It belongs to the NqrDE/RnfAE family. In terms of assembly, the complex is composed of six subunits: RnfA, RnfB, RnfC, RnfD, RnfE and RnfG.

It is found in the cell inner membrane. In terms of biological role, part of a membrane-bound complex that couples electron transfer with translocation of ions across the membrane. This is Ion-translocating oxidoreductase complex subunit E from Haemophilus influenzae (strain PittEE).